The sequence spans 198 residues: uncharacterized protein (198 aa).

A disordered region spans residues 1–23; that stretch reads MYFGKTRQSDQSGRVPPNQNVTT. Residues 9–23 are compositionally biased toward polar residues; it reads SDQSGRVPPNQNVTT. Mo-molybdopterin is bound by residues Cys-75, His-144, and Arg-149.

Mo-molybdopterin is required as a cofactor.

This is an uncharacterized protein from Bacillus subtilis (strain 168).